The sequence spans 361 residues: MKALAKLRPEEGIWMMDAPMPELGHNDIMIKIRKSAICGTDVHIYNWDEWSQKTIPVPMVVGHEYVGEIVAIGQEVNGFHIGDRVSGEGHITCGYCRNCRAGRRHLCRNAIGVGVNRPGSFAEYLVIPAYNAFRIPDNISDELAAIFDPFGNAVHTALSFDLVGEDVLITGAGPIGMMAAAVCRHVGARNVVITDVNAYRLELASKMGATRAVNVAEEKLTDVMIELGMTEGFDIGLEMSGAPSAFRAMLKAMNHGGRIAMLGIPHEPMSIDWGEVIFKGLFIKGIYGREMFETWYKMSALIQSGLDLSPIITHRFHIDEFQKGFDAMRSGQSGKVILNWDEAYTRHTSSCMCVDCATRHT.

Cys-38 contacts Zn(2+). Catalysis depends on charge relay system residues Thr-40 and His-43. The Zn(2+) site is built by His-63, Glu-64, Cys-93, Cys-96, Cys-99, and Cys-107. NAD(+) contacts are provided by residues Ile-175, Asp-195, Arg-200, 262-264 (LGI), and 286-287 (IY).

Belongs to the zinc-containing alcohol dehydrogenase family. Homotetramer. Zn(2+) is required as a cofactor.

Its subcellular location is the cytoplasm. The catalysed reaction is L-threonine + NAD(+) = (2S)-2-amino-3-oxobutanoate + NADH + H(+). It functions in the pathway amino-acid degradation; L-threonine degradation via oxydo-reductase pathway; glycine from L-threonine: step 1/2. In terms of biological role, catalyzes the NAD(+)-dependent oxidation of L-threonine to 2-amino-3-ketobutyrate. The polypeptide is L-threonine 3-dehydrogenase (Pectobacterium atrosepticum (strain SCRI 1043 / ATCC BAA-672) (Erwinia carotovora subsp. atroseptica)).